A 65-amino-acid chain; its full sequence is Small vasohibin-binding protein (65 aa).

Residues 1 to 22 (MEPACRKDKQKQQTPTRGDRTK) show a composition bias toward basic and acidic residues. The tract at residues 1–30 (MEPACRKDKQKQQTPTRGDRTKQKTAQQEL) is disordered. Residues 31 to 51 (KQRQRAEIYALNKVMTELEQQ) are a coiled coil.

Belongs to the SVBP family.

Its subcellular location is the cytoplasm. It is found in the secreted. It localises to the cytoskeleton. Functionally, enhances the tyrosine carboxypeptidase activity of vash1 and vash2, thereby promoting the removal of the C-terminal tyrosine residue of alpha-tubulin. Also required to enhance the solubility and secretion of vash1 and vash2. May play a role in axon and excitatory synapse formation. The polypeptide is Small vasohibin-binding protein (Danio rerio (Zebrafish)).